Consider the following 319-residue polypeptide: Protein sprouty homolog 1 (319 aa).

N-acetylmethionine is present on methionine 1. Disordered stretches follow at residues 54-78 and 100-160; these read TEGPSVVKRPAPRTAPRQEKHERTH and AVLP…QPKQ. The span at 69-78 shows a compositional bias: basic and acidic residues; sequence PRQEKHERTH. The span at 112 to 131 shows a compositional bias: low complexity; sequence SRSTSTGSAASSGSNSSASS. In terms of domain architecture, SPR spans 183–295; it reads QCGKCKCGEC…CYDWIHRPGC (113 aa).

Belongs to the sprouty family. Forms heterodimers with SPRY2. Interacts with TESK1. Interacts with CAV1 (via C-terminus).

It is found in the cytoplasm. It localises to the membrane. In terms of biological role, inhibits fibroblast growth factor (FGF)-induced retinal lens fiber differentiation, probably by inhibiting FGF-mediated phosphorylation of ERK1/2. Inhibits TGFB-induced epithelial-to-mesenchymal transition in lens epithelial cells. The protein is Protein sprouty homolog 1 (SPRY1) of Homo sapiens (Human).